The sequence spans 267 residues: Putative metal-binding protein TM_0123 (267 aa).

The signal sequence occupies residues 1-15 (MKKILLLLVLIVAVL). His-53, His-107, and His-172 together coordinate a divalent metal cation.

The protein belongs to the bacterial solute-binding protein 9 family.

The protein resides in the periplasm. Functionally, part of an ATP-binding cassette (ABC) transport system involved in metal import. Binds a metal with high affinity and specificity and delivers it to the membrane permease for translocation into the cytoplasm. In Thermotoga maritima (strain ATCC 43589 / DSM 3109 / JCM 10099 / NBRC 100826 / MSB8), this protein is Putative metal-binding protein TM_0123.